The primary structure comprises 1259 residues: Cingulin (1259 aa).

The head stretch occupies residues 9–324 (MADQPIPVGQ…EKFPSLQAQP (316 aa)). Residues 41-55 (QDSYGVAVRVQGIDG) carry the ZIM motif. A compositionally biased stretch (basic and acidic residues) spans 69–79 (SSYDYDRHYSE). 5 disordered regions span residues 69–151 (SSYD…IDTK), 169–232 (VRGR…RQSL), 317–338 (FPSL…KKEL), 941–969 (KSRR…NSSR), and 1192–1259 (REME…TSSC). The segment covering 80 to 100 (RSSTLDTAYSQSSRESAWSRG) has biased composition (polar residues). A compositionally biased stretch (low complexity) spans 117 to 127 (SATSQQSTSAS). The span at 128–145 (NKTNKNGLSTSSFSNQSS) shows a compositional bias: polar residues. Basic and acidic residues predominate over residues 179 to 204 (ALKDERKRSQSLDGRKNYQDTADSRE). The span at 220 to 229 (VSSANRSFAR) shows a compositional bias: polar residues. Positions 325 to 1218 (GEDTRSLGSQ…KTMEKESKRK (894 aa)) form a coiled coil. A compositionally biased stretch (basic and acidic residues) spans 326-338 (EDTRSLGSQKKEL). Positions 1220-1259 (IRPAHNDDDDLSSDGEYGGSYDPSSITSLLTESNLQTSSC) are tail. Over residues 1241–1259 (DPSSITSLLTESNLQTSSC) the composition is skewed to polar residues.

The protein belongs to the cingulin family. In terms of assembly, parallel homodimer. Interacts with TJP1/ZO1 and TJP2/ZO2.

The protein resides in the cell junction. It is found in the tight junction. Probably plays a role in the formation and regulation of the tight junction (TJ) paracellular permeability barrier, possibly by linking ZO proteins to the actomyosin cytoskeleton. The chain is Cingulin from Xenopus tropicalis (Western clawed frog).